The chain runs to 419 residues: UDP-N-acetylglucosamine 1-carboxyvinyltransferase (419 aa).

Residue 22–23 (KN) participates in phosphoenolpyruvate binding. Residue Arg91 coordinates UDP-N-acetyl-alpha-D-glucosamine. The active-site Proton donor is Cys115. Residue Cys115 is modified to 2-(S-cysteinyl)pyruvic acid O-phosphothioketal. UDP-N-acetyl-alpha-D-glucosamine contacts are provided by residues 120 to 124 (RPVDL), 160 to 163 (KVSV), Asp305, and Val327.

The protein belongs to the EPSP synthase family. MurA subfamily.

Its subcellular location is the cytoplasm. It carries out the reaction phosphoenolpyruvate + UDP-N-acetyl-alpha-D-glucosamine = UDP-N-acetyl-3-O-(1-carboxyvinyl)-alpha-D-glucosamine + phosphate. Its pathway is cell wall biogenesis; peptidoglycan biosynthesis. Its function is as follows. Cell wall formation. Adds enolpyruvyl to UDP-N-acetylglucosamine. This is UDP-N-acetylglucosamine 1-carboxyvinyltransferase from Shigella boydii serotype 18 (strain CDC 3083-94 / BS512).